A 750-amino-acid polypeptide reads, in one-letter code: Photosystem I P700 chlorophyll a apoprotein A1 (750 aa).

Transmembrane regions (helical) follow at residues 70–93, 156–179, 195–219, 291–309, 346–369, 385–411, 433–455, and 531–549; these read VFSAHFGQLSIIFLWLSGMYFHGA, LYCTAIGALVFAALMLFAGWFHYH, LNHHLAGLLGLGSLSWAGHQVHVSL, IAHHHLAIAILFLLAGHMY, WHAQLSLNLAMLGSLTIVVAHHMY, LSLFTHHMWIGGFLIVGAAAHAAIFMV, AIISHLNWVCIFLGFHSFGLYIH, and FLVHHIHAFTIHVTVLILL. Cys573 and Cys582 together coordinate [4Fe-4S] cluster. A run of 2 helical transmembrane segments spans residues 589-610 and 664-686; these read HVFLGLFWMYNAISVVIFHFSW and LSAYGLFFLGAHFVWAFSLMFLF. A chlorophyll a'-binding site is contributed by His675. Residues Met683 and Tyr691 each coordinate chlorophyll a. Phylloquinone is bound at residue Trp692. Residues 724–744 traverse the membrane as a helical segment; it reads AVGVTHYLLGGIATTWAFFLA.

The protein belongs to the PsaA/PsaB family. As to quaternary structure, the PsaA/B heterodimer binds the P700 chlorophyll special pair and subsequent electron acceptors. PSI consists of a core antenna complex that captures photons, and an electron transfer chain that converts photonic excitation into a charge separation. The eukaryotic PSI reaction center is composed of at least 11 subunits. The cofactor is P700 is a chlorophyll a/chlorophyll a' dimer, A0 is one or more chlorophyll a, A1 is one or both phylloquinones and FX is a shared 4Fe-4S iron-sulfur center..

The protein resides in the plastid. It localises to the chloroplast thylakoid membrane. It carries out the reaction reduced [plastocyanin] + hnu + oxidized [2Fe-2S]-[ferredoxin] = oxidized [plastocyanin] + reduced [2Fe-2S]-[ferredoxin]. Its function is as follows. PsaA and PsaB bind P700, the primary electron donor of photosystem I (PSI), as well as the electron acceptors A0, A1 and FX. PSI is a plastocyanin-ferredoxin oxidoreductase, converting photonic excitation into a charge separation, which transfers an electron from the donor P700 chlorophyll pair to the spectroscopically characterized acceptors A0, A1, FX, FA and FB in turn. Oxidized P700 is reduced on the lumenal side of the thylakoid membrane by plastocyanin. The protein is Photosystem I P700 chlorophyll a apoprotein A1 of Arabis hirsuta (Hairy rock-cress).